A 285-amino-acid polypeptide reads, in one-letter code: RNA polymerase sigma factor RpoH (285 aa).

The sigma-70 factor domain-2 stretch occupies residues 53–122 (LILSHLRFVV…IHEYVLRNWR (70 aa)). An Interaction with polymerase core subunit RpoC motif is present at residues 77–80 (DLVQ). The interval 229–280 (ALASLDERSQHIVRSRWLDDDKATLQDLAEMYGVSAERIRQLEKNAMKKLKM) is sigma-70 factor domain-4. The H-T-H motif DNA-binding region spans 253 to 272 (LQDLAEMYGVSAERIRQLEK).

It belongs to the sigma-70 factor family. RpoH subfamily. As to quaternary structure, interacts with the RNA polymerase core enzyme.

Its subcellular location is the cytoplasm. Its function is as follows. Sigma factors are initiation factors that promote the attachment of RNA polymerase to specific initiation sites and are then released. This sigma factor is involved in regulation of expression of heat shock genes. This Vibrio vulnificus (strain CMCP6) protein is RNA polymerase sigma factor RpoH.